The primary structure comprises 580 residues: DNA mismatch repair protein MutL (580 aa).

It belongs to the DNA mismatch repair MutL/HexB family.

In terms of biological role, this protein is involved in the repair of mismatches in DNA. It is required for dam-dependent methyl-directed DNA mismatch repair. May act as a 'molecular matchmaker', a protein that promotes the formation of a stable complex between two or more DNA-binding proteins in an ATP-dependent manner without itself being part of a final effector complex. The sequence is that of DNA mismatch repair protein MutL from Chlamydia caviae (strain ATCC VR-813 / DSM 19441 / 03DC25 / GPIC) (Chlamydophila caviae).